A 419-amino-acid chain; its full sequence is Peptide chain release factor subunit 1 (419 aa).

The protein belongs to the eukaryotic release factor 1 family. Heterodimer of two subunits, one of which binds GTP.

The protein localises to the cytoplasm. Functionally, directs the termination of nascent peptide synthesis (translation) in response to the termination codons UAA, UAG and UGA. This chain is Peptide chain release factor subunit 1, found in Methanococcus maripaludis (strain DSM 14266 / JCM 13030 / NBRC 101832 / S2 / LL).